Reading from the N-terminus, the 137-residue chain is Glutamate mutase sigma subunit (137 aa).

A B12-binding domain is found at 3–137 (KKTIVLGVIG…ADLKEDLNIK (135 aa)). Adenosylcob(III)alamin is bound by residues 13 to 17 (SDCHA), His-16, 61 to 63 (SSL), and 93 to 97 (NIVVG).

The protein belongs to the methylaspartate mutase GlmS subunit family. As to quaternary structure, heterotetramer composed of 2 epsilon subunits (GlmE) and 2 sigma subunits (GlmS). GlmE exists as a homodimer and GlmS as a monomer. Adenosylcob(III)alamin is required as a cofactor.

It catalyses the reaction (2S,3S)-3-methyl-L-aspartate = L-glutamate. The protein operates within amino-acid degradation; L-glutamate degradation via mesaconate pathway; acetate and pyruvate from L-glutamate: step 1/4. Catalyzes the carbon skeleton rearrangement of L-glutamate to L-threo-3-methylaspartate ((2S,3S)-3-methylaspartate). The polypeptide is Glutamate mutase sigma subunit (Clostridium tetani (strain Massachusetts / E88)).